The sequence spans 127 residues: Large ribosomal subunit protein eL8 (127 aa).

Belongs to the eukaryotic ribosomal protein eL8 family. In terms of assembly, part of the 50S ribosomal subunit. Probably part of the RNase P complex.

It is found in the cytoplasm. Functionally, multifunctional RNA-binding protein that recognizes the K-turn motif in ribosomal RNA, the RNA component of RNase P, box H/ACA, box C/D and box C'/D' sRNAs. The polypeptide is Large ribosomal subunit protein eL8 (Desulfurococcus amylolyticus (strain DSM 18924 / JCM 16383 / VKM B-2413 / 1221n) (Desulfurococcus kamchatkensis)).